A 174-amino-acid polypeptide reads, in one-letter code: Chorismate pyruvate-lyase (174 aa).

Substrate is bound by residues methionine 36, arginine 78, leucine 116, and glutamate 157.

It belongs to the UbiC family. As to quaternary structure, monomer.

It is found in the cytoplasm. It carries out the reaction chorismate = 4-hydroxybenzoate + pyruvate. The protein operates within cofactor biosynthesis; ubiquinone biosynthesis. In terms of biological role, removes the pyruvyl group from chorismate, with concomitant aromatization of the ring, to provide 4-hydroxybenzoate (4HB) for the ubiquinone pathway. In Erwinia tasmaniensis (strain DSM 17950 / CFBP 7177 / CIP 109463 / NCPPB 4357 / Et1/99), this protein is Chorismate pyruvate-lyase.